The primary structure comprises 301 residues: B3 domain-containing protein At5g18090 (301 aa).

The TF-B3 1 DNA-binding region spans 18–113 (FFKILRSADL…CFTVDIYQID (96 aa)). Disordered stretches follow at residues 123 to 142 (SATIASSSGRNKREQRNNIY) and 153 to 194 (SWSE…KMKV). Residues 133–142 (NKREQRNNIY) are compositionally biased toward basic and acidic residues. Positions 209 to 301 (VPEFTLTIKK…PTEMLVRVSK (93 aa)) form a DNA-binding region, TF-B3 2.

It is found in the nucleus. The sequence is that of B3 domain-containing protein At5g18090 from Arabidopsis thaliana (Mouse-ear cress).